We begin with the raw amino-acid sequence, 142 residues long: ER-derived vesicles protein ERV15 (142 aa).

Over 1–7 the chain is Cytoplasmic; the sequence is MSGTGLS. A helical membrane pass occupies residues 8–28; sequence LFVTGLILNCLNSICQIYFTI. The Extracellular portion of the chain corresponds to 29–55; that stretch reads LYGDLEADYINSIELCKRVNRLSVPEA. A helical transmembrane segment spans residues 56-76; sequence ILQAFISALFLFNGYWFVFLL. The Cytoplasmic segment spans residues 77–114; that stretch reads NVPVLAYNASKVYKKTHLLDATDIFRKLGRCKIECFLK. Residues 115–135 traverse the membrane as a helical segment; it reads LGFYLLIFFFYFYRMVTALLE. The Extracellular portion of the chain corresponds to 136 to 142; it reads NDANLIS.

The protein belongs to the cornichon family.

The protein localises to the membrane. The protein is ER-derived vesicles protein ERV15 (ERV15) of Saccharomyces cerevisiae (strain ATCC 204508 / S288c) (Baker's yeast).